Here is a 108-residue protein sequence, read N- to C-terminus: Phosphoribosyl-AMP cyclohydrolase (108 aa).

Position 78 (Asp78) interacts with Mg(2+). Cys79 serves as a coordination point for Zn(2+). Mg(2+) is bound by residues Asp80 and Asp82. Zn(2+) is bound by residues Cys95 and Cys102.

It belongs to the PRA-CH family. Homodimer. It depends on Mg(2+) as a cofactor. Zn(2+) is required as a cofactor.

The protein localises to the cytoplasm. The enzyme catalyses 1-(5-phospho-beta-D-ribosyl)-5'-AMP + H2O = 1-(5-phospho-beta-D-ribosyl)-5-[(5-phospho-beta-D-ribosylamino)methylideneamino]imidazole-4-carboxamide. The protein operates within amino-acid biosynthesis; L-histidine biosynthesis; L-histidine from 5-phospho-alpha-D-ribose 1-diphosphate: step 3/9. Its function is as follows. Catalyzes the hydrolysis of the adenine ring of phosphoribosyl-AMP. The chain is Phosphoribosyl-AMP cyclohydrolase from Nitrosopumilus maritimus (strain SCM1).